A 279-amino-acid chain; its full sequence is Proteasome subunit beta (279 aa).

Residues 1 to 53 constitute a propeptide, removed in mature form; by autocatalysis; that stretch reads MSGTAEFPGRIPAPYLEVGSSSFVELLGSVAPELLPGRRPLPPGDMGDAAPHG. Thr-54 acts as the Nucleophile in catalysis.

Belongs to the peptidase T1B family. The 20S proteasome core is composed of 14 alpha and 14 beta subunits that assemble into four stacked heptameric rings, resulting in a barrel-shaped structure. The two inner rings, each composed of seven catalytic beta subunits, are sandwiched by two outer rings, each composed of seven alpha subunits. The catalytic chamber with the active sites is on the inside of the barrel. Has a gated structure, the ends of the cylinder being occluded by the N-termini of the alpha-subunits. Is capped by the proteasome-associated ATPase, ARC.

The protein localises to the cytoplasm. It catalyses the reaction Cleavage of peptide bonds with very broad specificity.. It functions in the pathway protein degradation; proteasomal Pup-dependent pathway. The formation of the proteasomal ATPase ARC-20S proteasome complex, likely via the docking of the C-termini of ARC into the intersubunit pockets in the alpha-rings, may trigger opening of the gate for substrate entry. Interconversion between the open-gate and close-gate conformations leads to a dynamic regulation of the 20S proteasome proteolysis activity. Component of the proteasome core, a large protease complex with broad specificity involved in protein degradation. The sequence is that of Proteasome subunit beta from Stackebrandtia nassauensis (strain DSM 44728 / CIP 108903 / NRRL B-16338 / NBRC 102104 / LLR-40K-21).